A 233-amino-acid chain; its full sequence is Charged multivesicular body protein 4c (233 aa).

Disordered regions lie at residues 1-24 and 173-233; these read MSKL…SPQE and QEEL…AWAT. The intramolecular interaction with C-terminus stretch occupies residues 1–153; it reads MSKLGKFFKG…EISEAFSQRV (153 aa). Residues 125–183 are a coiled coil; that stretch reads LNKIDDLMQEITEQQDIAQEISEAFSQRVGFGDDFDEDELMAELEELEQEELNKKMTNI. The tract at residues 154–233 is intramolecular interaction with N-terminus; sequence GFGDDFDEDE…DIKQLAAWAT (80 aa). Residues 204 to 216 are compositionally biased toward low complexity; it reads SSTARRSRAASSQ. Ser210 bears the Phosphoserine; by AURKB mark.

It belongs to the SNF7 family. As to quaternary structure, probable core component of the endosomal sorting required for transport complex III (ESCRT-III). ESCRT-III components are thought to multimerize to form a flat lattice on the perimeter membrane of the endosome. Several assembly forms of ESCRT-III may exist that interact and act sequentially. Self-associates. Interacts with CHMP2A. Interacts with CHMP4A. Interacts with CHMP4B. Interacts with CHMP6. Interacts with VPS4A. Interacts with PDCD6IP; the interaction is direct. In terms of processing, phosphorylated at Ser-210 by AURKB during cytokinesis: together with ZFYVE19/ANCHR, phosphorylated CHMP4C retains abscission-competent VPS4 (VPS4A and/or VPS4B) at the midbody ring until abscission checkpoint signaling is terminated at late cytokinesis. In terms of tissue distribution, expressed in heart, spleen and kidney.

The protein localises to the cytoplasm. It localises to the cytosol. The protein resides in the late endosome membrane. It is found in the midbody. Its subcellular location is the midbody ring. Its function is as follows. Probable core component of the endosomal sorting required for transport complex III (ESCRT-III) which is involved in multivesicular bodies (MVBs) formation and sorting of endosomal cargo proteins into MVBs. MVBs contain intraluminal vesicles (ILVs) that are generated by invagination and scission from the limiting membrane of the endosome and mostly are delivered to lysosomes enabling degradation of membrane proteins, such as stimulated growth factor receptors, lysosomal enzymes and lipids. The MVB pathway appears to require the sequential function of ESCRT-O, -I,-II and -III complexes. ESCRT-III proteins mostly dissociate from the invaginating membrane before the ILV is released. The ESCRT machinery also functions in topologically equivalent membrane fission events, such as the terminal stages of cytokinesis and the budding of enveloped viruses (HIV-1 and other lentiviruses). Key component of the cytokinesis checkpoint, a process required to delay abscission to prevent both premature resolution of intercellular chromosome bridges and accumulation of DNA damage: upon phosphorylation by AURKB, together with ZFYVE19/ANCHR, retains abscission-competent VPS4 (VPS4A and/or VPS4B) at the midbody ring until abscission checkpoint signaling is terminated at late cytokinesis. Deactivation of AURKB results in dephosphorylation of CHMP4C followed by its dissociation from ANCHR and VPS4 and subsequent abscission. ESCRT-III proteins are believed to mediate the necessary vesicle extrusion and/or membrane fission activities, possibly in conjunction with the AAA ATPase VPS4. Involved in HIV-1 p6- and p9-dependent virus release. CHMP4A/B/C are required for the exosomal release of SDCBP, CD63 and syndecan. In Homo sapiens (Human), this protein is Charged multivesicular body protein 4c (CHMP4C).